A 77-amino-acid polypeptide reads, in one-letter code: NAD(P)H-quinone oxidoreductase subunit L (77 aa).

2 helical membrane passes run 12-32 (LIAYIGIISTYLLVIPLLLFY) and 47-67 (LGIYGLVFLFFPGLILFSPFL).

Belongs to the complex I NdhL subunit family. NDH-1 can be composed of about 15 different subunits; different subcomplexes with different compositions have been identified which probably have different functions.

It localises to the cellular thylakoid membrane. It catalyses the reaction a plastoquinone + NADH + (n+1) H(+)(in) = a plastoquinol + NAD(+) + n H(+)(out). The enzyme catalyses a plastoquinone + NADPH + (n+1) H(+)(in) = a plastoquinol + NADP(+) + n H(+)(out). Its function is as follows. NDH-1 shuttles electrons from an unknown electron donor, via FMN and iron-sulfur (Fe-S) centers, to quinones in the respiratory and/or the photosynthetic chain. The immediate electron acceptor for the enzyme in this species is believed to be plastoquinone. Couples the redox reaction to proton translocation, and thus conserves the redox energy in a proton gradient. Cyanobacterial NDH-1 also plays a role in inorganic carbon-concentration. This chain is NAD(P)H-quinone oxidoreductase subunit L, found in Prochlorococcus marinus (strain MIT 9301).